A 405-amino-acid chain; its full sequence is MAKLTVSDLELSGKKVLMRVDFNVPIKAGVIGNDNRIVAALPTIKYVLENNGRAILFSHLGRIKSEDDKKELSLAPVAARLGELLGKDVKFVPQTRGEELESAINALQDGEVLMVENTRFEDVVDGEVVKNESKNNPELGKYWASLGDDLFINDAFGTAHRAHASNVGIASNVSQAAAGFLMEKEIKFLGDAVANPVRPFVAIIGGAKVSDKIEIVKSLLNKADKVIVGGGMAYTFDAAKGNKIGNSLFEADKVELAKELMAEAGDKLVLPIDSIAADAFSNDAKTEVVDAEDGIPDGYMGLDIGPKSVKLLQDTLSDAKTVVWNGPMGVFEMSNFAKGTLAIGEELVKVTENGGTTIVGGGDSTAAVQQLGVADKLTHISTGGGASLEYLEGKELPGIASISEK.

Residues 21-23, arginine 36, 59-62, arginine 119, and arginine 161 each bind substrate; these read DFN and HLGR. Residues lysine 212, glycine 301, glutamate 332, and 361-364 contribute to the ATP site; that span reads GGDS.

Belongs to the phosphoglycerate kinase family. In terms of assembly, monomer.

The protein resides in the cytoplasm. The enzyme catalyses (2R)-3-phosphoglycerate + ATP = (2R)-3-phospho-glyceroyl phosphate + ADP. It functions in the pathway carbohydrate degradation; glycolysis; pyruvate from D-glyceraldehyde 3-phosphate: step 2/5. The chain is Phosphoglycerate kinase from Leuconostoc mesenteroides subsp. mesenteroides (strain ATCC 8293 / DSM 20343 / BCRC 11652 / CCM 1803 / JCM 6124 / NCDO 523 / NBRC 100496 / NCIMB 8023 / NCTC 12954 / NRRL B-1118 / 37Y).